The sequence spans 122 residues: Large ribosomal subunit protein bL19 (122 aa).

It belongs to the bacterial ribosomal protein bL19 family.

This protein is located at the 30S-50S ribosomal subunit interface and may play a role in the structure and function of the aminoacyl-tRNA binding site. The polypeptide is Large ribosomal subunit protein bL19 (Acinetobacter baumannii (strain AB307-0294)).